A 239-amino-acid polypeptide reads, in one-letter code: 1-(5-phosphoribosyl)-5-[(5-phosphoribosylamino)methylideneamino] imidazole-4-carboxamide isomerase (239 aa).

Aspartate 8 acts as the Proton acceptor in catalysis. Residue aspartate 129 is the Proton donor of the active site.

The protein belongs to the HisA/HisF family.

The protein resides in the cytoplasm. It carries out the reaction 1-(5-phospho-beta-D-ribosyl)-5-[(5-phospho-beta-D-ribosylamino)methylideneamino]imidazole-4-carboxamide = 5-[(5-phospho-1-deoxy-D-ribulos-1-ylimino)methylamino]-1-(5-phospho-beta-D-ribosyl)imidazole-4-carboxamide. It functions in the pathway amino-acid biosynthesis; L-histidine biosynthesis; L-histidine from 5-phospho-alpha-D-ribose 1-diphosphate: step 4/9. This chain is 1-(5-phosphoribosyl)-5-[(5-phosphoribosylamino)methylideneamino] imidazole-4-carboxamide isomerase, found in Bacillus cereus (strain G9842).